A 406-amino-acid polypeptide reads, in one-letter code: B3 domain-containing protein Os11g0197600 (406 aa).

A disordered region spans residues Met-1 to Glu-20. Residues Arg-30–Ser-123 constitute a DNA-binding region (TF-B3 1). A disordered region spans residues Glu-199 to Leu-245. A compositionally biased stretch (polar residues) spans Lys-214 to Gly-225. The TF-B3 2 DNA-binding region spans Ala-298–Val-393.

It is found in the nucleus. This Oryza sativa subsp. japonica (Rice) protein is B3 domain-containing protein Os11g0197600.